The following is a 708-amino-acid chain: Probable GTP diphosphokinase RSH3, chloroplastic (708 aa).

Disordered stretches follow at residues 1 to 50 (MSLP…AAGG) and 109 to 134 (HSPV…SWLA). Residues 1–58 (MSLPAISLYTSPPPGAVYSSEFDPSSRGSSPPCSTAPPSTSHRPPAAAGGLSCLFSSP) constitute a chloroplast transit peptide. Low complexity-rich tracts occupy residues 29–41 (SSPP…PSTS) and 118–131 (PSSS…PPAS). The HD domain maps to 233–337 (YLQHCVETAV…IKLADRVHNM (105 aa)).

Belongs to the RelA/SpoT family.

Its subcellular location is the plastid. It is found in the chloroplast. It carries out the reaction GTP + ATP = guanosine 3'-diphosphate 5'-triphosphate + AMP. In terms of biological role, probable ppGpp (guanosine 3'-diphosphate 5'-diphosphate) synthetase that may be involved in a rapid plant ppGpp-mediated response to pathogens and other stresses. This chain is Probable GTP diphosphokinase RSH3, chloroplastic (RSH3), found in Oryza sativa subsp. japonica (Rice).